The chain runs to 572 residues: 2-succinyl-5-enolpyruvyl-6-hydroxy-3-cyclohexene-1-carboxylate synthase (572 aa).

Belongs to the TPP enzyme family. MenD subfamily. In terms of assembly, homodimer. Mg(2+) is required as a cofactor. Requires Mn(2+) as cofactor. Thiamine diphosphate serves as cofactor.

It carries out the reaction isochorismate + 2-oxoglutarate + H(+) = 5-enolpyruvoyl-6-hydroxy-2-succinyl-cyclohex-3-ene-1-carboxylate + CO2. The protein operates within quinol/quinone metabolism; 1,4-dihydroxy-2-naphthoate biosynthesis; 1,4-dihydroxy-2-naphthoate from chorismate: step 2/7. Its pathway is quinol/quinone metabolism; menaquinone biosynthesis. Its function is as follows. Catalyzes the thiamine diphosphate-dependent decarboxylation of 2-oxoglutarate and the subsequent addition of the resulting succinic semialdehyde-thiamine pyrophosphate anion to isochorismate to yield 2-succinyl-5-enolpyruvyl-6-hydroxy-3-cyclohexene-1-carboxylate (SEPHCHC). This is 2-succinyl-5-enolpyruvyl-6-hydroxy-3-cyclohexene-1-carboxylate synthase from Vibrio campbellii (strain ATCC BAA-1116).